Reading from the N-terminus, the 189-residue chain is Probable RNA 2'-phosphotransferase (189 aa).

This sequence belongs to the KptA/TPT1 family.

Its function is as follows. Removes the 2'-phosphate from RNA via an intermediate in which the phosphate is ADP-ribosylated by NAD followed by a presumed transesterification to release the RNA and generate ADP-ribose 1''-2''-cyclic phosphate (APPR&gt;P). May function as an ADP-ribosylase. This Streptomyces griseus subsp. griseus (strain JCM 4626 / CBS 651.72 / NBRC 13350 / KCC S-0626 / ISP 5235) protein is Probable RNA 2'-phosphotransferase.